A 284-amino-acid polypeptide reads, in one-letter code: Nucleotide-binding protein NMB0738 (284 aa).

8 to 15 (GLSGSGKS) is a binding site for ATP. GTP is bound at residue 58–61 (DVRS).

It belongs to the RapZ-like family.

Functionally, displays ATPase and GTPase activities. The polypeptide is Nucleotide-binding protein NMB0738 (Neisseria meningitidis serogroup B (strain ATCC BAA-335 / MC58)).